We begin with the raw amino-acid sequence, 90 residues long: Protein RALF-like 29 (90 aa).

The N-terminal stretch at M1–A25 is a signal peptide. 2 disulfide bridges follow: C41–C50 and C63–C69.

It belongs to the plant rapid alkalinization factor (RALF) family.

It is found in the secreted. Cell signaling peptide that may regulate plant stress, growth, and development. Mediates a rapid alkalinization of extracellular space by mediating a transient increase in the cytoplasmic Ca(2+) concentration leading to a calcium-dependent signaling events through a cell surface receptor and a concomitant activation of some intracellular mitogen-activated protein kinases. The polypeptide is Protein RALF-like 29 (RALFL29) (Arabidopsis thaliana (Mouse-ear cress)).